We begin with the raw amino-acid sequence, 555 residues long: CTP synthase (555 aa).

Residues 1 to 267 form an amidoligase domain region; it reads MAKYIFVTGG…GNYLTLRLGL (267 aa). Serine 13 serves as a coordination point for CTP. Serine 13 contributes to the UTP binding site. Residue 14-19 participates in ATP binding; sequence SVGKGI. Tyrosine 54 lines the L-glutamine pocket. Aspartate 71 contacts ATP. Mg(2+)-binding residues include aspartate 71 and glutamate 141. CTP is bound by residues 148–150, 188–193, and lysine 224; these read DIE and KTKPTQ. Residues 188 to 193 and lysine 224 each bind UTP; that span reads KTKPTQ. One can recognise a Glutamine amidotransferase type-1 domain in the interval 292–535; that stretch reads AIALVGKYVE…IAAAAQTFRE (244 aa). Glycine 354 is an L-glutamine binding site. The Nucleophile; for glutamine hydrolysis role is filled by cysteine 381. L-glutamine-binding positions include 382–385, glutamate 406, and arginine 463; that span reads LGMQ. Catalysis depends on residues histidine 508 and glutamate 510.

This sequence belongs to the CTP synthase family. In terms of assembly, homotetramer.

The catalysed reaction is UTP + L-glutamine + ATP + H2O = CTP + L-glutamate + ADP + phosphate + 2 H(+). The enzyme catalyses L-glutamine + H2O = L-glutamate + NH4(+). It catalyses the reaction UTP + NH4(+) + ATP = CTP + ADP + phosphate + 2 H(+). The protein operates within pyrimidine metabolism; CTP biosynthesis via de novo pathway; CTP from UDP: step 2/2. With respect to regulation, allosterically activated by GTP, when glutamine is the substrate; GTP has no effect on the reaction when ammonia is the substrate. The allosteric effector GTP functions by stabilizing the protein conformation that binds the tetrahedral intermediate(s) formed during glutamine hydrolysis. Inhibited by the product CTP, via allosteric rather than competitive inhibition. Its function is as follows. Catalyzes the ATP-dependent amination of UTP to CTP with either L-glutamine or ammonia as the source of nitrogen. Regulates intracellular CTP levels through interactions with the four ribonucleotide triphosphates. The sequence is that of CTP synthase from Roseiflexus castenholzii (strain DSM 13941 / HLO8).